We begin with the raw amino-acid sequence, 348 residues long: MGYKISIDAMGGDHGLNTTIPAALEAVKKDSNLQIVLVGDHHKIKRALDRYSKVKKIKLPVLQRIAIHHASETVGMDESPSIAVRKKKDSSMRVAINLVKDRTVDACVSAGNTGALMATSKFVLKTINGVDRPAIVYALPAFNRETKQLSKTYMLDLGANVVCTSEQLFQFAIMGSILAASSKGIAEPRVSLLNIGEEEMKGLDNIKNAAKLLQGCDFINYNGYIEGKYIFDDTTDVIVCDGFVGNVSLKTMEGSLRLIESLIKKTIQESSLLMKIPIVMALPIFKKMKKGMNLDSFNGASLLGLTGIVVKSHGGASANAFETAIYEAIKEIKYNIPKTIQESLEKVL.

The protein belongs to the PlsX family. Homodimer. Probably interacts with PlsY.

The protein localises to the cytoplasm. The catalysed reaction is a fatty acyl-[ACP] + phosphate = an acyl phosphate + holo-[ACP]. The protein operates within lipid metabolism; phospholipid metabolism. Functionally, catalyzes the reversible formation of acyl-phosphate (acyl-PO(4)) from acyl-[acyl-carrier-protein] (acyl-ACP). This enzyme utilizes acyl-ACP as fatty acyl donor, but not acyl-CoA. This Francisella tularensis subsp. tularensis (strain FSC 198) protein is Phosphate acyltransferase.